The primary structure comprises 422 residues: Protein king tubby 2 (422 aa).

Residues 49–169 (PSNPDQIISS…ASGHNDAEGD (121 aa)) are disordered. Low complexity predominate over residues 57–81 (SSGSPTTVTATGTTTGSVTTTPTSP).

Belongs to the TUB family.

Its subcellular location is the cytoplasm. The protein localises to the nucleus. This Culex quinquefasciatus (Southern house mosquito) protein is Protein king tubby 2 (king-tubby2).